Reading from the N-terminus, the 97-residue chain is Citrate lyase acyl carrier protein 2 (97 aa).

Residue Ser-14 is modified to O-(phosphoribosyl dephospho-coenzyme A)serine.

The protein belongs to the CitD family. As to quaternary structure, oligomer with a subunit composition of (alpha,beta,gamma)6.

Its subcellular location is the cytoplasm. In terms of biological role, covalent carrier of the coenzyme of citrate lyase. The sequence is that of Citrate lyase acyl carrier protein 2 from Salmonella paratyphi A (strain ATCC 9150 / SARB42).